We begin with the raw amino-acid sequence, 437 residues long: MALVLRLMGGAAGMGAKAVGGACCELGSACFRQITKGLPHPTECGCLGSLFFYLGIHDHQKFNVLVEIHELDRVPKSCSLYMTIEAGRWSATSQVVKVKGQDQRVVVEERLMVHIRQVDNEVKIFLFKKGLVKTTRLANLVLKVKEDMIDKKFPKRTWYNMKVENGKSQPRINLSLHKLDPGLPTNQSPLLQQAMLIAQQEADEKGEELKLDLAKMTAKERLTFFSQVLEGPLERLNANGGACMQFYYKAVEVKPDRWEWCYWESAAACKEGKEKEGSIPFLAISLVLPDRKNRNVFFVRYHDKDNQHDVFFRRVDRDRNLWSDGLYEFIEKLRAYRETCSTRVPSQKGADGEEKKKKKKRREDGEDSSGEKSPRKSGGKKSRRPSTSPRLDISTARRLHSPRAQVPSKSPCAHQQMYEEVMISTQSSVVGDEEPQT.

A C2 domain is found at 45 to 179 (GCLGSLFFYL…PRINLSLHKL (135 aa)). Positions 230–338 (EGPLERLNAN…FIEKLRAYRE (109 aa)) constitute a PH domain. Residues 341-437 (STRVPSQKGA…SVVGDEEPQT (97 aa)) are disordered. Basic residues predominate over residues 375–384 (RKSGGKKSRR).

As to quaternary structure, interacts with RASP1. Interacts with RASP3.

It localises to the cytoplasmic vesicle. The protein resides in the secretory vesicle. Its subcellular location is the rhoptry membrane. Essential for tachyzoite invasion of host cells by controlling rhoptry secretion. Binds to phosphatidic acid (PA) and phosphatidylinositol 4,5-bisphosphate (PIP2) lipids and thus, likely contributes to the assembly of the machinery that docks or primes the rhoptry to the parasite cell membrane prior to the fusion with the host cell membrane. The protein is Rhoptry apical surface protein 2 of Toxoplasma gondii (strain ATCC 50853 / GT1).